A 315-amino-acid polypeptide reads, in one-letter code: Replication factor C small subunit (315 aa).

Position 43–50 (43–50 (GSPGVGKT)) interacts with ATP.

It belongs to the activator 1 small subunits family. RfcS subfamily. As to quaternary structure, heteromultimer composed of small subunits (RfcS) and large subunits (RfcL).

In terms of biological role, part of the RFC clamp loader complex which loads the PCNA sliding clamp onto DNA. This is Replication factor C small subunit from Methanococcus maripaludis (strain C7 / ATCC BAA-1331).